We begin with the raw amino-acid sequence, 424 residues long: Serine--tRNA ligase (424 aa).

An L-serine-binding site is contributed by 231-233; the sequence is TAE. 262–264 lines the ATP pocket; it reads RSE. E285 serves as a coordination point for L-serine. 349–352 is a binding site for ATP; that stretch reads EISS. S385 is an L-serine binding site.

Belongs to the class-II aminoacyl-tRNA synthetase family. Type-1 seryl-tRNA synthetase subfamily. As to quaternary structure, homodimer. The tRNA molecule binds across the dimer.

It localises to the cytoplasm. The enzyme catalyses tRNA(Ser) + L-serine + ATP = L-seryl-tRNA(Ser) + AMP + diphosphate + H(+). It carries out the reaction tRNA(Sec) + L-serine + ATP = L-seryl-tRNA(Sec) + AMP + diphosphate + H(+). It functions in the pathway aminoacyl-tRNA biosynthesis; selenocysteinyl-tRNA(Sec) biosynthesis; L-seryl-tRNA(Sec) from L-serine and tRNA(Sec): step 1/1. Catalyzes the attachment of serine to tRNA(Ser). Is also able to aminoacylate tRNA(Sec) with serine, to form the misacylated tRNA L-seryl-tRNA(Sec), which will be further converted into selenocysteinyl-tRNA(Sec). The sequence is that of Serine--tRNA ligase from Marinobacter nauticus (strain ATCC 700491 / DSM 11845 / VT8) (Marinobacter aquaeolei).